An 892-amino-acid chain; its full sequence is Translation initiation factor IF-2 (892 aa).

Residues 66 to 305 form a disordered region; the sequence is TRSTLNIPGT…SLQQGFQKPA (240 aa). Residues 68–82 show a composition bias toward polar residues; the sequence is STLNIPGTGGKSKSV. 2 stretches are compositionally biased toward basic and acidic residues: residues 93-159 and 166-216; these read VKRD…KDKV and DMTK…EENK. Residues 254–269 show a composition bias toward basic residues; the sequence is GRGRNAKAARPAKKGK. The segment covering 270 to 282 has biased composition (basic and acidic residues); sequence HAESKADREEARA. Residues 391–560 form the tr-type G domain; the sequence is PRAPVVTIMG…LLQAEVLELK (170 aa). A G1 region spans residues 400-407; sequence GHVDHGKT. 400-407 serves as a coordination point for GTP; sequence GHVDHGKT. A G2 region spans residues 425–429; sequence GITQH. The G3 stretch occupies residues 446 to 449; that stretch reads DTPG. GTP-binding positions include 446–450 and 500–503; these read DTPGH and NKID. The interval 500-503 is G4; sequence NKID. The segment at 536–538 is G5; it reads SAK.

It belongs to the TRAFAC class translation factor GTPase superfamily. Classic translation factor GTPase family. IF-2 subfamily.

The protein localises to the cytoplasm. One of the essential components for the initiation of protein synthesis. Protects formylmethionyl-tRNA from spontaneous hydrolysis and promotes its binding to the 30S ribosomal subunits. Also involved in the hydrolysis of GTP during the formation of the 70S ribosomal complex. This Salmonella typhi protein is Translation initiation factor IF-2.